The sequence spans 399 residues: S-adenosylmethionine synthase (399 aa).

An ATP-binding site is contributed by histidine 15. Residue aspartate 17 participates in Mg(2+) binding. Position 43 (glutamate 43) interacts with K(+). 2 residues coordinate L-methionine: glutamate 56 and glutamine 99. Residues 99 to 109 (QSADIAQGVDN) form a flexible loop region. Residues 174 to 176 (DGK), 244 to 245 (RF), aspartate 253, 259 to 260 (RK), alanine 276, and lysine 280 contribute to the ATP site. Aspartate 253 lines the L-methionine pocket. Lysine 284 lines the L-methionine pocket.

This sequence belongs to the AdoMet synthase family. As to quaternary structure, homotetramer; dimer of dimers. Mg(2+) is required as a cofactor. Requires K(+) as cofactor.

It localises to the cytoplasm. The enzyme catalyses L-methionine + ATP + H2O = S-adenosyl-L-methionine + phosphate + diphosphate. The protein operates within amino-acid biosynthesis; S-adenosyl-L-methionine biosynthesis; S-adenosyl-L-methionine from L-methionine: step 1/1. In terms of biological role, catalyzes the formation of S-adenosylmethionine (AdoMet) from methionine and ATP. The overall synthetic reaction is composed of two sequential steps, AdoMet formation and the subsequent tripolyphosphate hydrolysis which occurs prior to release of AdoMet from the enzyme. In Salinispora arenicola (strain CNS-205), this protein is S-adenosylmethionine synthase.